We begin with the raw amino-acid sequence, 330 residues long: Ferredoxin--NADP reductase (330 aa).

FAD contacts are provided by Thr18, Glu37, Gln45, Tyr50, Val90, Phe124, Asp286, and Thr327.

The protein belongs to the ferredoxin--NADP reductase type 2 family. In terms of assembly, homodimer. It depends on FAD as a cofactor.

It carries out the reaction 2 reduced [2Fe-2S]-[ferredoxin] + NADP(+) + H(+) = 2 oxidized [2Fe-2S]-[ferredoxin] + NADPH. The chain is Ferredoxin--NADP reductase from Halalkalibacterium halodurans (strain ATCC BAA-125 / DSM 18197 / FERM 7344 / JCM 9153 / C-125) (Bacillus halodurans).